Reading from the N-terminus, the 152-residue chain is Aspartate carbamoyltransferase regulatory chain (152 aa).

4 residues coordinate Zn(2+): C109, C114, C138, and C141.

This sequence belongs to the PyrI family. In terms of assembly, contains catalytic and regulatory chains. Requires Zn(2+) as cofactor.

In terms of biological role, involved in allosteric regulation of aspartate carbamoyltransferase. This Proteus mirabilis (strain HI4320) protein is Aspartate carbamoyltransferase regulatory chain.